Reading from the N-terminus, the 176-residue chain is Isopentenyl-diphosphate Delta-isomerase (176 aa).

Positions 22 and 28 each coordinate Mn(2+). The Nudix hydrolase domain maps to 26–160 (LRHKAVSVFV…PERYTPWLRI (135 aa)). Cys62 is a catalytic residue. His64 is a Mn(2+) binding site. Mg(2+) is bound at residue Glu82. Mn(2+)-binding residues include Glu108 and Glu110. Glu110 is a catalytic residue.

The protein belongs to the IPP isomerase type 1 family. The cofactor is Mg(2+). Requires Mn(2+) as cofactor.

Its subcellular location is the cytoplasm. It catalyses the reaction isopentenyl diphosphate = dimethylallyl diphosphate. It participates in isoprenoid biosynthesis; dimethylallyl diphosphate biosynthesis; dimethylallyl diphosphate from isopentenyl diphosphate: step 1/1. The protein operates within porphyrin-containing compound metabolism; chlorophyll biosynthesis. In terms of biological role, catalyzes the 1,3-allylic rearrangement of the homoallylic substrate isopentenyl (IPP) to its highly electrophilic allylic isomer, dimethylallyl diphosphate (DMAPP). The protein is Isopentenyl-diphosphate Delta-isomerase of Dinoroseobacter shibae (strain DSM 16493 / NCIMB 14021 / DFL 12).